The sequence spans 95 residues: RING finger protein Z (95 aa).

Positions 1–16 (MGNSKSKSNPSSSSES) are enriched in low complexity. The tract at residues 1 to 23 (MGNSKSKSNPSSSSESQKGAPTV) is disordered. Gly-2 is lipidated: N-myristoyl glycine; by host. The RING-type; atypical zinc-finger motif lies at 40-76 (CKCCWFADKNLIKCSDHYLCLRCLNVMLKNSDLCNIC). The PTAP/PSAP motif signature appears at 90 to 93 (PSAP).

This sequence belongs to the arenaviridae Z protein family. In terms of assembly, interacts with protein NP; this interaction probably directs the encapsidated genome to budding sites. Interacts (via RING domain) with polymerase L; this interaction inhibits viral transcription and replication, Z partially blocks the product exit tunnel for the releasing nascent RNA product. Interacts with the glycoprotein complex; this interaction plays a role in virion budding. Interacts with host eIF4E; this interaction results in eIF4E reduced affinity for its substrate, the 5'-m7 G cap structure. Interacts (via late-budding domain) with host TSG101; this interaction is essential for budding and release of viral particles. Interacts with host RPLP0; this interaction may serve to load ribosome-like particles inside the virion. Interacts with host PML; this interaction induces PML bodies redistribution in the cytoplasm upon viral infection. Post-translationally, myristoylation is required for the role of RING finger protein Z in assembly and budding.

Its subcellular location is the virion. It localises to the host cytoplasm. The protein localises to the host perinuclear region. The protein resides in the host cell membrane. Functionally, plays a crucial role in virion assembly and budding. Expressed late in the virus life cycle, it acts as an inhibitor of viral transcription and RNA synthesis by interacting with the viral polymerase L. Presumably recruits the NP encapsidated genome to cellular membranes at budding sites via direct interaction with NP. Plays critical roles in the final steps of viral release by interacting with host TSG101, a member of the vacuolar protein-sorting pathway and using other cellular host proteins involved in vesicle formation pathway. The budding of the virus progeny occurs after association of protein Z with the viral glycoprotein complex SSP-GP1-GP2 at the cell periphery, step that requires myristoylation of protein Z. Also selectively represses protein production by associating with host eIF4E. In cell-based minigenome assay, has an inhibitory effect on the ribonucleoprotein machinery (vRNP), which is responsible for the replication and transcription of the viral genome. This Guanarito mammarenavirus (isolate Human/Venezuela/NH-95551/1990) (GTOV) protein is RING finger protein Z.